The chain runs to 434 residues: Pre-B-cell leukemia transcription factor 3 (434 aa).

The interval 20–41 is disordered; sequence SVQGGMALPPPPHGHEGADGDG. A compositionally biased stretch (basic and acidic residues) spans 32–41; the sequence is HGHEGADGDG. Positions 41–234 constitute a PBC domain; the sequence is GRKQDIGDIL…VMILRSRFLD (194 aa). The segment at 48–127 is PBC-A; the sequence is DILHQIMTIT…EGVSGPEKGG (80 aa). The tract at residues 130-234 is PBC-B; sequence AAAAAAAAAS…VMILRSRFLD (105 aa). A DNA-binding region (homeobox; TALE-type) is located at residues 235-297; that stretch reads ARRKRRNFSK…NKRIRYKKNI (63 aa). Residues 326–341 show a composition bias toward low complexity; sequence NQTNSPTTPNSGSSGS. Disordered regions lie at residues 326–349 and 403–434; these read NQTN…NSGD and LNAN…DTSN. A compositionally biased stretch (polar residues) spans 403–422; the sequence is LNANGGWQDATTPSSVTSPT.

This sequence belongs to the TALE/PBX homeobox family. Interacts with PBXIP1. Ubiquitously expressed.

The protein localises to the nucleus. Functionally, transcriptional activator that binds the sequence 5'-ATCAATCAA-3'. The protein is Pre-B-cell leukemia transcription factor 3 (PBX3) of Homo sapiens (Human).